The primary structure comprises 303 residues: Aspartate carbamoyltransferase catalytic subunit (303 aa).

The carbamoyl phosphate site is built by R51 and T52. K80 is an L-aspartate binding site. Residues R101, H129, and Q132 each contribute to the carbamoyl phosphate site. L-aspartate-binding residues include R162 and R221. Carbamoyl phosphate is bound by residues L260 and P261.

This sequence belongs to the aspartate/ornithine carbamoyltransferase superfamily. ATCase family. As to quaternary structure, heterooligomer of catalytic and regulatory chains.

The enzyme catalyses carbamoyl phosphate + L-aspartate = N-carbamoyl-L-aspartate + phosphate + H(+). Its pathway is pyrimidine metabolism; UMP biosynthesis via de novo pathway; (S)-dihydroorotate from bicarbonate: step 2/3. Its function is as follows. Catalyzes the condensation of carbamoyl phosphate and aspartate to form carbamoyl aspartate and inorganic phosphate, the committed step in the de novo pyrimidine nucleotide biosynthesis pathway. The sequence is that of Aspartate carbamoyltransferase catalytic subunit from Saccharolobus islandicus (strain M.16.27) (Sulfolobus islandicus).